The following is a 235-amino-acid chain: Phosphatidylserine decarboxylase proenzyme (235 aa).

Ser-204 serves as the catalytic Schiff-base intermediate with substrate; via pyruvic acid. A Pyruvic acid (Ser); by autocatalysis modification is found at Ser-204.

The protein belongs to the phosphatidylserine decarboxylase family. PSD-A subfamily. Heterodimer of a large membrane-associated beta subunit and a small pyruvoyl-containing alpha subunit. It depends on pyruvate as a cofactor. Is synthesized initially as an inactive proenzyme. Formation of the active enzyme involves a self-maturation process in which the active site pyruvoyl group is generated from an internal serine residue via an autocatalytic post-translational modification. Two non-identical subunits are generated from the proenzyme in this reaction, and the pyruvate is formed at the N-terminus of the alpha chain, which is derived from the carboxyl end of the proenzyme. The post-translation cleavage follows an unusual pathway, termed non-hydrolytic serinolysis, in which the side chain hydroxyl group of the serine supplies its oxygen atom to form the C-terminus of the beta chain, while the remainder of the serine residue undergoes an oxidative deamination to produce ammonia and the pyruvoyl prosthetic group on the alpha chain.

Its subcellular location is the cell membrane. The catalysed reaction is a 1,2-diacyl-sn-glycero-3-phospho-L-serine + H(+) = a 1,2-diacyl-sn-glycero-3-phosphoethanolamine + CO2. The protein operates within phospholipid metabolism; phosphatidylethanolamine biosynthesis; phosphatidylethanolamine from CDP-diacylglycerol: step 2/2. Catalyzes the formation of phosphatidylethanolamine (PtdEtn) from phosphatidylserine (PtdSer). This is Phosphatidylserine decarboxylase proenzyme from Mycobacterium sp. (strain KMS).